A 121-amino-acid chain; its full sequence is Large ribosomal subunit protein bL17 (121 aa).

The protein belongs to the bacterial ribosomal protein bL17 family. Part of the 50S ribosomal subunit. Contacts protein L32.

The chain is Large ribosomal subunit protein bL17 from Metamycoplasma arthritidis (strain 158L3-1) (Mycoplasma arthritidis).